We begin with the raw amino-acid sequence, 388 residues long: Cystathionine gamma-synthase (388 aa).

The segment at 1–24 (MSEDRTGHQGISGPATRAIHAGYR) is disordered. Lysine 208 carries the post-translational modification N6-(pyridoxal phosphate)lysine.

Belongs to the trans-sulfuration enzymes family. In terms of assembly, homotetramer. Pyridoxal 5'-phosphate is required as a cofactor.

The protein resides in the cytoplasm. The enzyme catalyses O-succinyl-L-homoserine + L-cysteine = L,L-cystathionine + succinate + H(+). Functionally, catalyzes the formation of L-cystathionine from O-succinyl-L-homoserine (OSHS) and L-cysteine, via a gamma-replacement reaction. In the absence of thiol, catalyzes gamma-elimination to form 2-oxobutanoate, succinate and ammonia. The polypeptide is Cystathionine gamma-synthase (metB) (Mycobacterium bovis (strain ATCC BAA-935 / AF2122/97)).